The sequence spans 308 residues: Prephenate dehydratase (308 aa).

Residues 3–187 (RITYLGPEGT…AHTRFVLVGR (185 aa)) enclose the Prephenate dehydratase domain. Residues 201 to 278 (SVVLGLGNVP…EDVRYLGSWP (78 aa)) enclose the ACT domain.

Homodimer.

The enzyme catalyses prephenate + H(+) = 3-phenylpyruvate + CO2 + H2O. It functions in the pathway amino-acid biosynthesis; L-phenylalanine biosynthesis; phenylpyruvate from prephenate: step 1/1. The sequence is that of Prephenate dehydratase (pheA) from Mycobacteroides abscessus (strain ATCC 19977 / DSM 44196 / CCUG 20993 / CIP 104536 / JCM 13569 / NCTC 13031 / TMC 1543 / L948) (Mycobacterium abscessus).